Here is a 1230-residue protein sequence, read N- to C-terminus: Basic-leucine zipper transcription factor A (1230 aa).

Disordered stretches follow at residues 65–108 (LYLS…NIIN), 180–233 (LNGN…QQHQ), 270–310 (QQLK…PSTQ), and 422–578 (HQQN…RKKD). 5 stretches are compositionally biased toward low complexity: residues 69-108 (NSSNNTNNNNNNNNNNNNNNNNNNNNNNNNNNNNNNNIIN), 192-233 (NNFS…QQHQ), 270-287 (QQLKQQQPQQHPIQSPQP), 295-310 (PSLQQHQTYSYTPSTQ), and 422-447 (HQQNIQQHQNQNQQQLQLPQPQQQQH). 2 stretches are compositionally biased toward polar residues: residues 448 to 458 (KSTPPTQNTPP) and 466 to 475 (TPTLTTNGKG). Over residues 476–503 (SKSTPPTTTTTTTTTTSSSSSSSSSSSS) the composition is skewed to low complexity. The segment covering 523–537 (PHHHHHHHNNHHHHH) has biased composition (basic residues). Positions 541–554 (FSDENDEEFIDENE) are enriched in acidic residues. The bZIP domain occupies 555-618 (DKSKNKSRSS…LGDVMRPDFD (64 aa)). The basic motif stretch occupies residues 556 to 586 (KSKNKSRSSQNIASRNYRQRKKDHISEVEFK). The span at 562-571 (RSSQNIASRN) shows a compositional bias: polar residues. Residues 590–604 (LSLENERLKQENHLL) are leucine-zipper. Residues 728–753 (LKIDMELRTERDQLDREIKELFLKKI) adopt a coiled-coil conformation. 2 disordered regions span residues 772–869 (TFNS…EHNK) and 1025–1230 (NYTN…TPNI). Low complexity-rich tracts occupy residues 774-803 (NSESDYPSSPSSASNSSNSPPTSSPTIITP) and 810-831 (NNQNNQNNNQMINSNSNNSNNN). Residues 832-845 (SHHHHHHHHSHLHG) are compositionally biased toward basic residues. Polar residues predominate over residues 1025-1042 (NYTNSPLITSSPSQLTPN). Composition is skewed to low complexity over residues 1052-1146 (NNNN…NNGN) and 1153-1193 (QALH…SPSS).

Belongs to the bZIP family. Binds DNA as a dimer. Heterodimerizes with dimB; in vitro. Also able to form homodimer; in vitro.

It localises to the nucleus. Functionally, transcriptional regulator involved in DIF-1 signaling. DIF-1 (Differentiation Inducing Factor-1) is a signal molecule involved in the differentiation of pstO (prestalk-O) cells. Functions both as an activator of prestalk gene expression and a repressor of prespore gene expression. The chain is Basic-leucine zipper transcription factor A (dimA) from Dictyostelium discoideum (Social amoeba).